The sequence spans 369 residues: Maltose/maltodextrin import ATP-binding protein MalK (369 aa).

An ABC transporter domain is found at 4-234 (VQLRNVTKAW…PADRFVAGFI (231 aa)). Residue 36–43 (GPSGCGKS) participates in ATP binding.

The protein belongs to the ABC transporter superfamily. Maltooligosaccharide importer (TC 3.A.1.1.1) family. As to quaternary structure, the complex is composed of two ATP-binding proteins (MalK), two transmembrane proteins (MalG and MalK) and a solute-binding protein (MalE).

It is found in the cell inner membrane. It catalyses the reaction D-maltose(out) + ATP + H2O = D-maltose(in) + ADP + phosphate + H(+). Its function is as follows. Part of the ABC transporter complex MalEFGK involved in maltose/maltodextrin import. Responsible for energy coupling to the transport system. The sequence is that of Maltose/maltodextrin import ATP-binding protein MalK from Salmonella typhi.